The primary structure comprises 163 residues: Cyclic pyranopterin monophosphate synthase (163 aa).

Substrate contacts are provided by residues Leu-78–His-80 and Met-116–Glu-117. The active site involves Asp-131.

The protein belongs to the MoaC family. Homohexamer; trimer of dimers.

The enzyme catalyses (8S)-3',8-cyclo-7,8-dihydroguanosine 5'-triphosphate = cyclic pyranopterin phosphate + diphosphate. It functions in the pathway cofactor biosynthesis; molybdopterin biosynthesis. Functionally, catalyzes the conversion of (8S)-3',8-cyclo-7,8-dihydroguanosine 5'-triphosphate to cyclic pyranopterin monophosphate (cPMP). The protein is Cyclic pyranopterin monophosphate synthase of Agrobacterium fabrum (strain C58 / ATCC 33970) (Agrobacterium tumefaciens (strain C58)).